We begin with the raw amino-acid sequence, 459 residues long: Cysteine--tRNA ligase (459 aa).

Residue Cys27 participates in Zn(2+) binding. The short motif at 29–39 is the 'HIGH' region element; sequence PTVYNFVHIGN. Residues Cys211, His236, and Glu240 each contribute to the Zn(2+) site. A 'KMSKS' region motif is present at residues 269–273; the sequence is KMSKS. Residue Lys272 participates in ATP binding.

Belongs to the class-I aminoacyl-tRNA synthetase family. Monomer. Zn(2+) is required as a cofactor.

Its subcellular location is the cytoplasm. It carries out the reaction tRNA(Cys) + L-cysteine + ATP = L-cysteinyl-tRNA(Cys) + AMP + diphosphate. This Ehrlichia canis (strain Jake) protein is Cysteine--tRNA ligase.